The chain runs to 205 residues: Guanylate kinase (205 aa).

The 179-residue stretch at 18–196 (PKLFIISAPA…AYQVLRSIFI (179 aa)) folds into the Guanylate kinase-like domain. 25 to 32 (APAGAGKT) is an ATP binding site.

This sequence belongs to the guanylate kinase family.

The protein resides in the cytoplasm. The enzyme catalyses GMP + ATP = GDP + ADP. Essential for recycling GMP and indirectly, cGMP. This Chlamydia trachomatis serovar D (strain ATCC VR-885 / DSM 19411 / UW-3/Cx) protein is Guanylate kinase (gmk).